The chain runs to 161 residues: Cytochrome c-type biogenesis protein CcmE (161 aa).

The Cytoplasmic portion of the chain corresponds to 1–8 (MNARRKKR). A helical; Signal-anchor for type II membrane protein membrane pass occupies residues 9 to 29 (LALATALIGGVAAIASLLLYA). The Periplasmic segment spans residues 30–161 (LNSNLNLFYT…EYDSTQKTGY (132 aa)). Positions 131 and 135 each coordinate heme.

It belongs to the CcmE/CycJ family.

Its subcellular location is the cell inner membrane. Its function is as follows. Heme chaperone required for the biogenesis of c-type cytochromes. Transiently binds heme delivered by CcmC and transfers the heme to apo-cytochromes in a process facilitated by CcmF and CcmH. The polypeptide is Cytochrome c-type biogenesis protein CcmE (Shewanella loihica (strain ATCC BAA-1088 / PV-4)).